Consider the following 901-residue polypeptide: MDETHENEASDSFDPVFENSYHDDVTFNTEDDDEPPLEPRFKYERLKGEETLPFMKTATFTSIDLHDKFIAIGTATGLIYILDHHGYGNFDSVPPLKPHRCAVSKVKFDETGSYVLSCANDSKIVVSGVGNDKLCCTINIQVMPKSIYFSPDFIRQQSGHCFIMGERNLVLYEKRMFQYKASSLYSGSERDGFIHCCSWNENLIAFTNDTGTRVYERGAERIITSVQPSHDVDRVRSSRSPPKHTWMPENNLVIGWADTVTILKIRDDDGVKKGEVHHIFHVSMFICGISYIPESGIDNMELFLVGLQLEGEDFDDCASVISTVTTLTALESSACTILKTSVIRPLGLKEFELQSEDMIESVKLSNHTLPYMIHGLGIPYLATYFILTTKHIIMAVPYGPEDGIRWRLKYKLYDEALDMAKHNADLLSKTDLSPKKVGRMIIEGYLTGKRARAAASRLPLICGECKEEWEWAVNQFEEVKLCTLLAEVLPDGTPTLDPECYQKVLIACLFNNVKQFRKLVQTWSPDLYMTSFIIDRTQWRIQQISKSGNLADVDETERVLMDALAHLYLYERKYESALKILMSCQDFQIFNVIDKHQLFDLVKDQITELMNINSERALRLLLDNADSVEPSFVMEKIGRQPKLQLAYLTKLMSRNEGTEFADKAVQLYAEYDQKKLLPFLRKNANYNVNKARKLCSDKGYIEETIYLLAKSGNHYDAVKMMVREYRNMEKVIDYCKDQNDPDLWIHLLGVVAEFPAHFSQLIIEASNCLDPLLIMDKLPDDSDIPNLSEALDKLLVDYTNHAELQQCCYDSTLNDLNVLTQGLISAADESVSVNIVSRCSLCAQIIINSNQETTKKFSDIKVFKCGHIFHLACSTSEMERRQSIEEGLCIACSDQIELINV.

Positions 1 to 37 (MDETHENEASDSFDPVFENSYHDDVTFNTEDDDEPPL) are disordered. One copy of the CHCR repeat lies at 618 to 760 (LRLLLDNADS…VAEFPAHFSQ (143 aa)). An RING-type; atypical zinc finger spans residues 839–893 (CSLCAQIIINSNQETTKKFSDIKVFKCGHIFHLACSTSEMERRQSIEEGLCIACS).

The protein belongs to the VPS41 family. In terms of assembly, probable component of the homotypic fusion and vacuole protein sorting (HOPS) complex consisting of the core class C Vps proteins vps-11, vps-16, vps-18, and which further associates with vps-33.1, vps-39 and vps-41.

The protein localises to the endosome membrane. It is found in the late endosome membrane. It localises to the early endosome membrane. Its subcellular location is the lysosome membrane. The protein resides in the golgi apparatus. The protein localises to the trans-Golgi network. It is found in the cytoplasmic vesicle. It localises to the clathrin-coated vesicle. Its subcellular location is the cytoplasm. The protein resides in the cytosol. Its function is as follows. Plays a role in vesicle-mediated protein trafficking to lysosomal compartments including the endocytic membrane transport pathways. Believed to act in part as a core component of the putative HOPS endosomal tethering complex which is proposed to be involved in the rab-5-to-rab-7 endosome conversion probably implicating sand-1, and via binding SNAREs and SNARE complexes to mediate tethering and docking events during SNARE-mediated membrane fusion. The HOPS complex is proposed to be recruited to rab-7 on the late endosomal membrane and to regulate late endocytic, phagocytic and autophagic traffic towards lysosomes. Within the HOPS complex, contributes to the normal development of gut granules in the adult intestine. May mediate the tethering of autophagosomes with lysosomes. Has a role in the negative regulation of apoptosis. Required for uptake of exogenous dsRNA which is used in experimental RNA silencing. The polypeptide is Vacuolar protein sorting-associated protein 41 homolog (Caenorhabditis elegans).